A 308-amino-acid polypeptide reads, in one-letter code: MMVSSHLGSPDQAGHVDLASPADPPPPDASASHSPVDMPAPVAAAGSDRQPPIDLTAAAFFDVDNTLVQGSSAVHFGRGLAARHYFTYRDVLGFLYAQAKFQLLGKENSNDVAAGRRKALAFIEGRSVAELVALGEEIYDEIIADKIWDGTRELTQMHLDAGQQVWLITATPYELAATIARRLGLTGALGTVAESVDGIFTGRLVGEILHGTGKAHAVRSLAIREGLNLKRCTAYSDSYNDVPMLSLVGTAVAINPDARLRSLARERGWEIRDFRIARKAARIGVPSALALGAAGGALAALASRRQSR.

Residues 1-48 (MMVSSHLGSPDQAGHVDLASPADPPPPDASASHSPVDMPAPVAAAGSD) are disordered. The active-site Nucleophile is the aspartate 62. The Mg(2+) site is built by aspartate 62, aspartate 64, and aspartate 237. Residue aspartate 64 is the Proton donor of the active site.

This sequence belongs to the HAD-like hydrolase superfamily. SerB family. The cofactor is Mg(2+).

This Mycobacterium tuberculosis (strain CDC 1551 / Oshkosh) protein is Putative hydrolase MT0526.